Reading from the N-terminus, the 338-residue chain is Stage V sporulation protein AD (338 aa).

The protein is Stage V sporulation protein AD (spoVAD) of Bacillus subtilis (strain 168).